Here is a 521-residue protein sequence, read N- to C-terminus: Cytochrome P450 1A1 (521 aa).

F229 provides a ligand contact to substrate. Position 463 (C463) interacts with heme.

This sequence belongs to the cytochrome P450 family. The cofactor is heme.

The protein localises to the endoplasmic reticulum membrane. Its subcellular location is the microsome membrane. The catalysed reaction is an organic molecule + reduced [NADPH--hemoprotein reductase] + O2 = an alcohol + oxidized [NADPH--hemoprotein reductase] + H2O + H(+). Its function is as follows. Cytochromes P450 are a group of heme-thiolate monooxygenases. They oxidize a variety of structurally unrelated compounds, including steroids, fatty acids, and xenobiotics. In Sparus aurata (Gilthead sea bream), this protein is Cytochrome P450 1A1 (cyp1a1).